The sequence spans 843 residues: Glycogen phosphorylase, brain form (843 aa).

At Ala-2 the chain carries N-acetylalanine. Position 15 is a phosphoserine; by PHK; in form phosphorylase A (Ser-15). AMP is bound by residues Asp-43, Tyr-197, and Arg-310. Tyr-197 is modified (phosphotyrosine). Tyr-473 carries the phosphotyrosine modification. Lys-569 is a binding site for pyridoxal 5'-phosphate. Positions Thr-677–Gly-678 are pyridoxal 5'-phosphate. Position 681 is an N6-(pyridoxal phosphate)lysine (Lys-681).

It belongs to the glycogen phosphorylase family. Homodimer. Dimers associate into a tetramer to form the enzymatically active phosphorylase A. It depends on pyridoxal 5'-phosphate as a cofactor. Phosphorylation of Ser-15 converts phosphorylase B (unphosphorylated) to phosphorylase A.

It catalyses the reaction [(1-&gt;4)-alpha-D-glucosyl](n) + phosphate = [(1-&gt;4)-alpha-D-glucosyl](n-1) + alpha-D-glucose 1-phosphate. Its activity is regulated as follows. Activity of phosphorylase is controlled both by allosteric means (through the non-covalent binding of metabolites) and by covalent modification. Thus AMP allosterically activates, whereas ATP, ADP, and glucose-6-phosphate allosterically inhibit, phosphorylase B. Its function is as follows. Glycogen phosphorylase that regulates glycogen mobilization. Phosphorylase is an important allosteric enzyme in carbohydrate metabolism. Enzymes from different sources differ in their regulatory mechanisms and in their natural substrates. However, all known phosphorylases share catalytic and structural properties. In Ovis aries (Sheep), this protein is Glycogen phosphorylase, brain form (PYGB).